The chain runs to 203 residues: ATP-dependent Clp protease proteolytic subunit (203 aa).

S103 acts as the Nucleophile in catalysis. Residue H128 is part of the active site.

It belongs to the peptidase S14 family. As to quaternary structure, fourteen ClpP subunits assemble into 2 heptameric rings which stack back to back to give a disk-like structure with a central cavity, resembling the structure of eukaryotic proteasomes.

It is found in the cytoplasm. The enzyme catalyses Hydrolysis of proteins to small peptides in the presence of ATP and magnesium. alpha-casein is the usual test substrate. In the absence of ATP, only oligopeptides shorter than five residues are hydrolyzed (such as succinyl-Leu-Tyr-|-NHMec, and Leu-Tyr-Leu-|-Tyr-Trp, in which cleavage of the -Tyr-|-Leu- and -Tyr-|-Trp bonds also occurs).. Functionally, cleaves peptides in various proteins in a process that requires ATP hydrolysis. Has a chymotrypsin-like activity. Plays a major role in the degradation of misfolded proteins. The polypeptide is ATP-dependent Clp protease proteolytic subunit (Nitrosococcus oceani (strain ATCC 19707 / BCRC 17464 / JCM 30415 / NCIMB 11848 / C-107)).